A 310-amino-acid chain; its full sequence is Olfactory receptor 8B12 (310 aa).

Residues 1-24 (MAAKNSSVTEFILEGLTHQPGLRI) lie on the Extracellular side of the membrane. N-linked (GlcNAc...) asparagine glycosylation is present at Asn-5. Residues 25–45 (PLFFLFLGFYTVTVVGNLGLI) form a helical membrane-spanning segment. Over 46 to 53 (TLIGLNSH) the chain is Cytoplasmic. The chain crosses the membrane as a helical span at residues 54 to 74 (LHTPMYFFLFNLSLIDFCFST). Residues 75 to 98 (TITPKMLMSFVSRKNIISFTGCMT) are Extracellular-facing. Cys-96 and Cys-188 form a disulfide bridge. The helical transmembrane segment at 99-119 (QLFFFCFFVVSESFILSAMAY) threads the bilayer. The Cytoplasmic portion of the chain corresponds to 120–138 (DRYVAICNPLLYTVTMSCQ). The chain crosses the membrane as a helical span at residues 139–159 (VCLLLLLGAYGMGFAGAMAHT). At 160 to 196 (GSIMNLTFCADNLVNHFMCDILPLLELSCNSSYMNEL) the chain is on the extracellular side. Residues Asn-164 and Asn-189 are each glycosylated (N-linked (GlcNAc...) asparagine). Residues 197 to 216 (VVFIVVAVDVGMPIVTVFIS) traverse the membrane as a helical segment. At 217–236 (YALILSSILHNSSTEGRSKA) the chain is on the cytoplasmic side. A helical membrane pass occupies residues 237-257 (FSTCSSHIIVVSLFFGSGAFM). Residues 258 to 270 (YLKPLSILPLEQG) lie on the Extracellular side of the membrane. The chain crosses the membrane as a helical span at residues 271-291 (KVSSLFYTIIVPVLNPLIYSL). Topologically, residues 292–310 (RNKDVKVALRRTLGRKIFS) are cytoplasmic.

This sequence belongs to the G-protein coupled receptor 1 family.

The protein localises to the cell membrane. Functionally, odorant receptor. This Homo sapiens (Human) protein is Olfactory receptor 8B12 (OR8B12).